Here is a 343-residue protein sequence, read N- to C-terminus: MLFSLIRPAIHALDPERAHRFSIEALKLAPLPHSRHSDASLSVKVAGIRFPNPVGVAAGYDKDAEVPDALLGLGFGFVEVGSITPRPQEGNPKPRLFRLSRDRAVINRMGFNNAGADVAERRLRARAAKGGVIGINVGANKDSDDRIADYATMVRRMAPYASYLTANISSPNTPGLRALQDEGALTGLLDAVMEAPGADGPPVFLKVAPDLEPADVDAIARIAIDKGLGALIVSNTTIFRPDLQSRDRDETGGLSGAPLKPLALQRLRDFRSATGGAIPLVGVGGIATIDDAWERIRAGASLVQVYSAMVYEGPGLGRSIARGLSRKLREHGMASIEEAVGSE.

FMN contacts are provided by residues 58 to 62 (AGYDK) and Ser82. Lys62 contacts substrate. 107 to 111 (NRMGF) is a binding site for substrate. 2 residues coordinate FMN: Asn136 and Asn167. Substrate is bound at residue Asn167. Residue Ser170 is the Nucleophile of the active site. Asn172 contributes to the substrate binding site. The FMN site is built by Lys206 and Ser234. 235–236 (NT) contacts substrate. Residues Gly256, Gly285, and 306–307 (YS) contribute to the FMN site.

It belongs to the dihydroorotate dehydrogenase family. Type 2 subfamily. As to quaternary structure, monomer. It depends on FMN as a cofactor.

The protein localises to the cell membrane. The enzyme catalyses (S)-dihydroorotate + a quinone = orotate + a quinol. It functions in the pathway pyrimidine metabolism; UMP biosynthesis via de novo pathway; orotate from (S)-dihydroorotate (quinone route): step 1/1. Catalyzes the conversion of dihydroorotate to orotate with quinone as electron acceptor. The sequence is that of Dihydroorotate dehydrogenase (quinone) from Erythrobacter litoralis (strain HTCC2594).